Consider the following 546-residue polypeptide: Chaperonin GroEL (546 aa).

Residues 29–32 (TLGP), Lys50, 86–90 (DGTTT), Gly414, 478–480 (NAA), and Asp494 each bind ATP.

It belongs to the chaperonin (HSP60) family. As to quaternary structure, forms a cylinder of 14 subunits composed of two heptameric rings stacked back-to-back. Interacts with the co-chaperonin GroES.

It localises to the cytoplasm. The enzyme catalyses ATP + H2O + a folded polypeptide = ADP + phosphate + an unfolded polypeptide.. Together with its co-chaperonin GroES, plays an essential role in assisting protein folding. The GroEL-GroES system forms a nano-cage that allows encapsulation of the non-native substrate proteins and provides a physical environment optimized to promote and accelerate protein folding. The polypeptide is Chaperonin GroEL (Psychrobacter arcticus (strain DSM 17307 / VKM B-2377 / 273-4)).